The following is a 196-amino-acid chain: Protein LSM12 homolog B (196 aa).

In terms of domain architecture, Sm spans 3-70; sequence APGPGEYFSV…LAYVSEVDII (68 aa). The AD domain occupies 81–175; sequence ASLNFNKLVN…IVEKHFRDVE (95 aa).

Belongs to the LSM12 family.

This is Protein LSM12 homolog B (lsm12b) from Danio rerio (Zebrafish).